We begin with the raw amino-acid sequence, 487 residues long: Serine/threonine-protein kinase 4 (487 aa).

Residue Met1 is modified to N-acetylmethionine. Phosphothreonine is present on Thr3. Residues 30-281 (FDVLEKLGEG…ATQLLQHPFV (252 aa)) enclose the Protein kinase domain. ATP-binding positions include 36–44 (LGEGSYGSV) and Lys59. The Proton acceptor role is filled by Asp149. Thr183 carries the phosphothreonine; by autocatalysis modification. Ser265 is modified (phosphoserine). Positions 290 to 310 (LRDLINEAMDVKLKRQESQQR) form a coiled coil. A compositionally biased stretch (basic and acidic residues) spans 303–312 (KRQESQQREV). The disordered stretch occupies residues 303–332 (KRQESQQREVDQDDEENSEEDEMDSGTMVR). Positions 313-326 (DQDDEENSEEDEMD) are enriched in acidic residues. Ser320 carries the post-translational modification Phosphoserine. 2 positions are modified to phosphothreonine: Thr340 and Thr367. At Thr387 the chain carries Phosphothreonine; by PKB/AKT1. 2 positions are modified to phosphoserine: Ser410 and Ser414. Residue Tyr433 is modified to Phosphotyrosine. An SARAH domain is found at 433-480 (YEFLKSWTVEDLQKRLLALDPMMEQEIEEIRQKYQSKRQPILDAIEAK).

Belongs to the protein kinase superfamily. STE Ser/Thr protein kinase family. STE20 subfamily. As to quaternary structure, homodimer; mediated via the coiled-coil region. Interacts with NORE1, which inhibits autoactivation. Interacts with and stabilizes SAV1. Interacts with RASSF1. Interacts with FOXO3. Interacts with RASSF2 (via SARAH domain). Interacts with AR, PKB/AKT1, TNNI3 and SIRT1. Interacts with DLG5 (via PDZ domain 3). Interacts with MARK3 and SCRIB in the presence of DLG5. Mg(2+) is required as a cofactor. Post-translationally, autophosphorylated on serine and threonine residues. Phosphorylation at Thr-387 by PKB/AKT1, leads to inhibition of its: kinase activity, nuclear translocation and autophosphorylation at Thr-183. It also diminishes its cleavage by caspases and its ability to phosphorylate FOXO3. In terms of processing, proteolytically cleaved by caspase-3 during apoptosis at Asp-326 and Asp-349 resulting in a 37 kDa or a 39 kDa subunit respectively. The 39 kDa subunit is further cleaved into the 37 kDa form. Proteolytic cleavage results in kinase activation and nuclear translocation of the truncated form (MST1/N). It is less likely that cleavage at Asp-349 is a prerequisite for activation as this site is not conserved in the murine ortholog.

It localises to the cytoplasm. It is found in the nucleus. It carries out the reaction L-seryl-[protein] + ATP = O-phospho-L-seryl-[protein] + ADP + H(+). The catalysed reaction is L-threonyl-[protein] + ATP = O-phospho-L-threonyl-[protein] + ADP + H(+). Inhibited by the C-terminal non-catalytic region. Activated by caspase-cleavage. Full activation also requires homodimerization and autophosphorylation of Thr-183. Activated by RASSF1 which acts by preventing its dephosphorylation. Functionally, stress-activated, pro-apoptotic kinase which, following caspase-cleavage, enters the nucleus and induces chromatin condensation followed by internucleosomal DNA fragmentation. Key component of the Hippo signaling pathway which plays a pivotal role in organ size control and tumor suppression by restricting proliferation and promoting apoptosis. The core of this pathway is composed of a kinase cascade wherein STK3/MST2 and STK4/MST1, in complex with its regulatory protein SAV1, phosphorylates and activates LATS1/2 in complex with its regulatory protein MOB1, which in turn phosphorylates and inactivates YAP1 oncoprotein and WWTR1/TAZ. Phosphorylation of YAP1 by LATS2 inhibits its translocation into the nucleus to regulate cellular genes important for cell proliferation, cell death, and cell migration. STK3/MST2 and STK4/MST1 are required to repress proliferation of mature hepatocytes, to prevent activation of facultative adult liver stem cells (oval cells), and to inhibit tumor formation. Phosphorylates 'Ser-14' of histone H2B (H2BS14ph) during apoptosis. Phosphorylates FOXO3 upon oxidative stress, which results in its nuclear translocation and cell death initiation. Phosphorylates MOBKL1A, MOBKL1B and RASSF2. Phosphorylates TNNI3 (cardiac Tn-I) and alters its binding affinity to TNNC1 (cardiac Tn-C) and TNNT2 (cardiac Tn-T). Phosphorylates FOXO1 on 'Ser-212' and regulates its activation and stimulates transcription of PMAIP1 in a FOXO1-dependent manner. Phosphorylates SIRT1 and inhibits SIRT1-mediated p53/TP53 deacetylation, thereby promoting p53/TP53 dependent transcription and apoptosis upon DNA damage. Acts as an inhibitor of PKB/AKT1. Phosphorylates AR on 'Ser-650' and suppresses its activity by intersecting with PKB/AKT1 signaling and antagonizing formation of AR-chromatin complexes. This chain is Serine/threonine-protein kinase 4 (STK4), found in Macaca mulatta (Rhesus macaque).